The primary structure comprises 1466 residues: Retrovirus-related Pol polyprotein from transposon RE1 (1466 aa).

The interval 227 to 270 (SHRNTTTTNNNNNGNRNNRYDNRNNNNNSKPWQQSSTNFHPNNN) is disordered. Residues 229-254 (RNTTTTNNNNNGNRNNRYDNRNNNNN) are compositionally biased toward low complexity. A compositionally biased stretch (polar residues) spans 255 to 270 (SKPWQQSSTNFHPNNN). The CCHC-type zinc-finger motif lies at 278-294 (KCQICGVQGHSAKRCSQ). The active-site For protease activity is Asp-334. Positions 519 to 682 (NSTRPLEYIY…SPFQKLFGTS (164 aa)) constitute an Integrase catalytic domain. The Mg(2+) site is built by Asp-530 and Asp-592. The disordered stretch occupies residues 772 to 927 (WSPHTTLPTR…NNNQAPLNTH (156 aa)). Composition is skewed to low complexity over residues 796–827 (AATP…SFPS) and 836–898 (QNGP…SSTS). A compositionally biased stretch (pro residues) spans 899–912 (PTPPSILIHPPPPL). Residues 915–927 (IVNNNNQAPLNTH) show a composition bias toward polar residues. A Reverse transcriptase Ty1/copia-type domain is found at 982–1225 (NHTWDLVPPP…ITAKPVTTPM (244 aa)).

It carries out the reaction DNA(n) + a 2'-deoxyribonucleoside 5'-triphosphate = DNA(n+1) + diphosphate. The chain is Retrovirus-related Pol polyprotein from transposon RE1 (RE1) from Arabidopsis thaliana (Mouse-ear cress).